We begin with the raw amino-acid sequence, 552 residues long: Phosphoglucomutase (552 aa).

Catalysis depends on S143, which acts as the Phosphoserine intermediate. Mg(2+)-binding residues include S143, D295, D297, and D299.

The protein belongs to the phosphohexose mutase family. Mg(2+) serves as cofactor.

It carries out the reaction alpha-D-glucose 1-phosphate = alpha-D-glucose 6-phosphate. Its pathway is glycolipid metabolism; diglucosyl-diacylglycerol biosynthesis. Functionally, catalyzes the interconversion between glucose-6-phosphate and alpha-glucose-1-phosphate. This is the first step in the biosynthesis of diglucosyl-diacylglycerol (Glc2-DAG), i.e. the predominant glycolipid found in the S.aureus membrane, which is also used as a membrane anchor for lipoteichoic acid (LTA). The chain is Phosphoglucomutase (pgcA) from Staphylococcus aureus (strain bovine RF122 / ET3-1).